A 265-amino-acid polypeptide reads, in one-letter code: Imidazole glycerol phosphate synthase subunit HisF (265 aa).

Catalysis depends on residues D12 and D131.

Belongs to the HisA/HisF family. In terms of assembly, heterodimer of HisH and HisF.

Its subcellular location is the cytoplasm. The catalysed reaction is 5-[(5-phospho-1-deoxy-D-ribulos-1-ylimino)methylamino]-1-(5-phospho-beta-D-ribosyl)imidazole-4-carboxamide + L-glutamine = D-erythro-1-(imidazol-4-yl)glycerol 3-phosphate + 5-amino-1-(5-phospho-beta-D-ribosyl)imidazole-4-carboxamide + L-glutamate + H(+). It participates in amino-acid biosynthesis; L-histidine biosynthesis; L-histidine from 5-phospho-alpha-D-ribose 1-diphosphate: step 5/9. In terms of biological role, IGPS catalyzes the conversion of PRFAR and glutamine to IGP, AICAR and glutamate. The HisF subunit catalyzes the cyclization activity that produces IGP and AICAR from PRFAR using the ammonia provided by the HisH subunit. The chain is Imidazole glycerol phosphate synthase subunit HisF from Alkalilimnicola ehrlichii (strain ATCC BAA-1101 / DSM 17681 / MLHE-1).